Consider the following 441-residue polypeptide: Methylenetetrahydrofolate--tRNA-(uracil-5-)-methyltransferase TrmFO (441 aa).

Residue 7 to 12 participates in FAD binding; sequence GAGLSG.

It belongs to the MnmG family. TrmFO subfamily. It depends on FAD as a cofactor.

It localises to the cytoplasm. The enzyme catalyses uridine(54) in tRNA + (6R)-5,10-methylene-5,6,7,8-tetrahydrofolate + NADH + H(+) = 5-methyluridine(54) in tRNA + (6S)-5,6,7,8-tetrahydrofolate + NAD(+). It carries out the reaction uridine(54) in tRNA + (6R)-5,10-methylene-5,6,7,8-tetrahydrofolate + NADPH + H(+) = 5-methyluridine(54) in tRNA + (6S)-5,6,7,8-tetrahydrofolate + NADP(+). Functionally, catalyzes the folate-dependent formation of 5-methyl-uridine at position 54 (M-5-U54) in all tRNAs. This is Methylenetetrahydrofolate--tRNA-(uracil-5-)-methyltransferase TrmFO from Pseudothermotoga lettingae (strain ATCC BAA-301 / DSM 14385 / NBRC 107922 / TMO) (Thermotoga lettingae).